The sequence spans 431 residues: Keratin, type I cytoskeletal 40 (431 aa).

The head stretch occupies residues 1 to 89 (MTSDCSSTHC…CEDGVFTSNE (89 aa)). Residues 89–400 (EKETMQFLND…GLLDSEDSRL (312 aa)) form the IF rod domain. The tract at residues 90 to 124 (KETMQFLNDRLASYLEKVRSLEETNAELESRIQEQ) is coil 1A. The segment at 125-135 (CEQDIPMVCPD) is linker 1. The segment at 136–236 (YQRYFNTIED…HEEEVNLLRE (101 aa)) is coil 1B. Residues 237-252 (QLGDRLSVELDTAPTL) are linker 12. Residues 253–396 (DLNRVLDEMR…NTYWGLLDSE (144 aa)) are coil 2. The tract at residues 397–431 (DSRLSCSPCSTTCTSSNTCEPCSAYVICTVENCCL) is tail.

The protein belongs to the intermediate filament family. Heterotetramer of two type I and two type II keratins. In terms of tissue distribution, expressed in skin and scalp. Also very weakly expressed in tongue, breast, colon and small intestine. In the hair follicle, it is specifically present in the upper hair cuticle. Not present in the upper cortex (at protein level).

Functionally, may play a role in late hair differentiation. The chain is Keratin, type I cytoskeletal 40 (KRT40) from Homo sapiens (Human).